Consider the following 390-residue polypeptide: Trehalose-phosphate phosphatase (390 aa).

Catalysis depends on D150, which acts as the Nucleophile. Mg(2+) contacts are provided by D150, D152, and D333. A substrate-binding site is contributed by 150–152 (DFD).

It belongs to the trehalose phosphatase family. Requires Mg(2+) as cofactor.

It carries out the reaction alpha,alpha-trehalose 6-phosphate + H2O = alpha,alpha-trehalose + phosphate. It functions in the pathway glycan biosynthesis; trehalose biosynthesis. Functionally, removes the phosphate from trehalose 6-phosphate to produce free trehalose. This is Trehalose-phosphate phosphatase (otsB) from Mycobacterium ulcerans (strain Agy99).